The primary structure comprises 542 residues: Membrane protein insertase YidC (542 aa).

6 consecutive transmembrane segments (helical) span residues 6–26 (NILL…WQTD), 326–346 (LVVD…LLMF), 350–370 (FVGN…GMLY), 421–441 (GGCL…WVLL), 458–478 (LSVQ…MFLM), and 501–521 (VIFT…WLVG).

It belongs to the OXA1/ALB3/YidC family. Type 1 subfamily. Interacts with the Sec translocase complex via SecD. Specifically interacts with transmembrane segments of nascent integral membrane proteins during membrane integration.

The protein localises to the cell inner membrane. Its function is as follows. Required for the insertion and/or proper folding and/or complex formation of integral membrane proteins into the membrane. Involved in integration of membrane proteins that insert both dependently and independently of the Sec translocase complex, as well as at least some lipoproteins. Aids folding of multispanning membrane proteins. In Shewanella loihica (strain ATCC BAA-1088 / PV-4), this protein is Membrane protein insertase YidC.